A 488-amino-acid polypeptide reads, in one-letter code: Multidrug resistance outer membrane protein MdtP (488 aa).

Residues 1-23 (MINRQLSRLLLCSILGSTTLISG) form the signal peptide. Cysteine 24 is lipidated: N-palmitoyl cysteine. Cysteine 24 carries the S-diacylglycerol cysteine lipid modification.

It belongs to the outer membrane factor (OMF) (TC 1.B.17) family. As to quaternary structure, could be part of a tripartite efflux system composed of MdtN, MdtO and MdtP.

The protein resides in the cell outer membrane. Functionally, could be involved in resistance to puromycin, acriflavine and tetraphenylarsonium chloride. This Escherichia coli (strain K12) protein is Multidrug resistance outer membrane protein MdtP (mdtP).